A 121-amino-acid polypeptide reads, in one-letter code: Small ribosomal subunit protein uS13 (121 aa).

The disordered stretch occupies residues 94-121 (GLPVRGQRTRTNARTRKGPRKGAAALKK).

It belongs to the universal ribosomal protein uS13 family. In terms of assembly, part of the 30S ribosomal subunit. Forms a loose heterodimer with protein S19. Forms two bridges to the 50S subunit in the 70S ribosome.

Its function is as follows. Located at the top of the head of the 30S subunit, it contacts several helices of the 16S rRNA. In the 70S ribosome it contacts the 23S rRNA (bridge B1a) and protein L5 of the 50S subunit (bridge B1b), connecting the 2 subunits; these bridges are implicated in subunit movement. Contacts the tRNAs in the A and P-sites. In Verminephrobacter eiseniae (strain EF01-2), this protein is Small ribosomal subunit protein uS13.